We begin with the raw amino-acid sequence, 147 residues long: Large ribosomal subunit protein uL13 (147 aa).

It belongs to the universal ribosomal protein uL13 family. As to quaternary structure, part of the 50S ribosomal subunit.

Functionally, this protein is one of the early assembly proteins of the 50S ribosomal subunit, although it is not seen to bind rRNA by itself. It is important during the early stages of 50S assembly. This chain is Large ribosomal subunit protein uL13, found in Leuconostoc citreum (strain KM20).